The sequence spans 155 residues: Ribosomal RNA large subunit methyltransferase H (155 aa).

S-adenosyl-L-methionine is bound by residues Leu73, Gly104, and 123–128 (LSPLTL).

This sequence belongs to the RNA methyltransferase RlmH family. As to quaternary structure, homodimer.

The protein resides in the cytoplasm. The catalysed reaction is pseudouridine(1915) in 23S rRNA + S-adenosyl-L-methionine = N(3)-methylpseudouridine(1915) in 23S rRNA + S-adenosyl-L-homocysteine + H(+). In terms of biological role, specifically methylates the pseudouridine at position 1915 (m3Psi1915) in 23S rRNA. In Pseudomonas aeruginosa (strain LESB58), this protein is Ribosomal RNA large subunit methyltransferase H.